The primary structure comprises 127 residues: MADLAKIVEDLSSLTVLEAAELSKLLEEKWGVSAAAPVAVAAVGGAAGGAAAPAEEEKTEFDVILTDAGANKINVIKEVRAITGLGLKEAKDLVEGAPKAVKEGVSKAEAADIKKKLEDAGAKADVK.

This sequence belongs to the bacterial ribosomal protein bL12 family. As to quaternary structure, homodimer. Part of the ribosomal stalk of the 50S ribosomal subunit. Forms a multimeric L10(L12)X complex, where L10 forms an elongated spine to which 2 to 4 L12 dimers bind in a sequential fashion. Binds GTP-bound translation factors.

Its function is as follows. Forms part of the ribosomal stalk which helps the ribosome interact with GTP-bound translation factors. Is thus essential for accurate translation. The sequence is that of Large ribosomal subunit protein bL12 from Rhizobium etli (strain ATCC 51251 / DSM 11541 / JCM 21823 / NBRC 15573 / CFN 42).